Reading from the N-terminus, the 66-residue chain is Conotoxin Lt5.6 (66 aa).

A signal peptide spans 1–19; sequence MLCLPVFIILLLLASPAAP. Residues 20–54 constitute a propeptide that is removed on maturation; it reads KSLETRIQNDLIRAGLTDADLKTEKGFLSGLLNVA.

Belongs to the conotoxin T superfamily. Post-translationally, contains 2 disulfide bonds that can be either 'C1-C3, C2-C4' or 'C1-C4, C2-C3', since these disulfide connectivities have been observed for conotoxins with cysteine framework V (for examples, see AC P0DQQ7 and AC P81755). As to expression, expressed by the venom duct.

It is found in the secreted. The polypeptide is Conotoxin Lt5.6 (Conus litteratus (Lettered cone)).